Here is a 365-residue protein sequence, read N- to C-terminus: Putrescine carbamoyltransferase (365 aa).

Residues 54–58 (STRTR), R105, and H132 contribute to the carbamoyl phosphate site. 277–280 (HCLP) contacts putrescine.

This sequence belongs to the aspartate/ornithine carbamoyltransferase superfamily. PTCase family. As to quaternary structure, homotrimer.

The protein resides in the cytoplasm. It carries out the reaction carbamoyl phosphate + putrescine = N-carbamoylputrescine + phosphate + H(+). It functions in the pathway amine and polyamine biosynthesis; putrescine biosynthesis via agmatine pathway; putrescine from N-carbamoylputrescine (transferase route): step 1/1. Functionally, catalyzes the phosphorolysis of N-carbamoylputrescine to form carbamoyl phosphate and putrescine. Is involved in the degradation pathway of the polyamine agmatine. This Mycoplasma mycoides subsp. mycoides SC (strain CCUG 32753 / NCTC 10114 / PG1) protein is Putrescine carbamoyltransferase.